We begin with the raw amino-acid sequence, 157 residues long: Heat shock protein beta-9 (157 aa).

Over residues 1-17 the composition is skewed to low complexity; the sequence is MQRVGSSLPSGSQSASQ. Disordered stretches follow at residues 1 to 20 and 136 to 157; these read MQRVGSSLPSGSQSASQCPS and PPSEAQTGPASRFRSRGSKKLA. Residues 35-148 form the sHSP domain; that stretch reads QRLTEDAAAV…EAQTGPASRF (114 aa). Residues 148–157 show a composition bias toward basic residues; sequence FRSRGSKKLA.

It belongs to the small heat shock protein (HSP20) family.

The protein resides in the cytoplasm. The protein localises to the nucleus. The chain is Heat shock protein beta-9 (HSPB9) from Bos taurus (Bovine).